The primary structure comprises 847 residues: Receptor-like protein 12 (847 aa).

An N-terminal signal peptide occupies residues 1-27; sequence MMIRSHRHWVFSSRIIIFLSLLVHSLA. The Extracellular portion of the chain corresponds to 28 to 798; that stretch reads SSSPHFCRDD…LSEAEENMFN (771 aa). N-linked (GlcNAc...) asparagine glycans are attached at residues Asn52, Asn66, Asn103, and Asn132. LRR repeat units follow at residues 109–133, 135–157, 158–181, 183–205, 206–229, 231–253, 254–277, 279–301, 302–325, 326–350, 351–374, 375–398, 400–422, 424–442, 443–466, 467–491, 492–514, 516–539, 541–562, 563–587, 589–613, 657–681, 682–704, 705–729, and 731–754; these read LQYL…LGNL, HLTL…IGNL, NQLR…LGNL, RLVN…IGDL, KQLR…LGNL, NLVH…IGNL, IELR…FANL, KLSI…MSIF, HNLE…LLLI, PSLE…TSSS, TKLQ…ISRL, LNLE…ISKL, NLLH…LWRL, TMVL…SQEE, ALIE…ICKL, SSLG…RNFS, GSIK…IFSK, TELV…LINC, ALEL…WLES, LPSL…HASI, FQSL…YFSN, RRDF…LGYL, KELR…FLAN, LTKL…LAAL, and FLSY…QFQR. N-linked (GlcNAc...) asparagine glycosylation is present at Asn180. N-linked (GlcNAc...) asparagine glycans are attached at residues Asn210 and Asn228. N-linked (GlcNAc...) asparagine glycosylation is found at Asn263, Asn276, and Asn289. An N-linked (GlcNAc...) asparagine glycan is attached at Asn346. Asn386 carries an N-linked (GlcNAc...) asparagine glycan. Asn437 is a glycosylation site (N-linked (GlcNAc...) asparagine). N-linked (GlcNAc...) asparagine glycosylation is found at Asn489 and Asn503. A glycan (N-linked (GlcNAc...) asparagine) is linked at Asn601. Asn688 and Asn704 each carry an N-linked (GlcNAc...) asparagine glycan. Asn736 carries an N-linked (GlcNAc...) asparagine glycan. The helical transmembrane segment at 799-819 threads the bilayer; it reads WVAAAIAYGPGVLCGLVIGHF. The Cytoplasmic segment spans residues 820 to 847; that stretch reads YTSHNHEWFTEKFGRKQHKALTSVKCSL.

It belongs to the RLP family.

The protein localises to the cell membrane. Functionally, involved in the perception of CLV3 and CLV3-like peptides, that act as extracellular signals regulating meristems maintenance. The chain is Receptor-like protein 12 from Arabidopsis thaliana (Mouse-ear cress).